A 262-amino-acid chain; its full sequence is Shikimate dehydrogenase (NADP(+)) (262 aa).

Shikimate-binding positions include 15-17 (SRS) and Thr-62. Residue Lys-66 is the Proton acceptor of the active site. Residue Glu-78 coordinates NADP(+). Positions 87 and 102 each coordinate shikimate. Residues 126–130 (GAGGA), 150–155 (NRTLAR), and Met-214 each bind NADP(+). Tyr-216 contributes to the shikimate binding site. Position 236 (Gly-236) interacts with NADP(+).

The protein belongs to the shikimate dehydrogenase family. In terms of assembly, homodimer.

It carries out the reaction shikimate + NADP(+) = 3-dehydroshikimate + NADPH + H(+). Its pathway is metabolic intermediate biosynthesis; chorismate biosynthesis; chorismate from D-erythrose 4-phosphate and phosphoenolpyruvate: step 4/7. Its function is as follows. Involved in the biosynthesis of the chorismate, which leads to the biosynthesis of aromatic amino acids. Catalyzes the reversible NADPH linked reduction of 3-dehydroshikimate (DHSA) to yield shikimate (SA). The protein is Shikimate dehydrogenase (NADP(+)) of Acinetobacter baumannii (strain ACICU).